Consider the following 88-residue polypeptide: Putative regulatory protein PCC7424_3427 (88 aa).

Belongs to the RemA family.

The sequence is that of Putative regulatory protein PCC7424_3427 from Gloeothece citriformis (strain PCC 7424) (Cyanothece sp. (strain PCC 7424)).